The sequence spans 596 residues: Protein kinase C iota type (596 aa).

Positions Met1–His12 are enriched in polar residues. Residues Met1–Ser23 are disordered. Pro2 carries the post-translational modification N-acetylproline. Positions Pro2–Val28 are required for interaction with RAB2. A regulatory domain region spans residues Pro2–Asp253. Residue Thr3 is modified to Phosphothreonine. A phosphoserine mark is found at Ser7 and Ser8. Residue Thr9 is modified to Phosphothreonine. The PB1 domain maps to Gln25–Cys108. The segment at Asp72 to Arg91 is interaction with PARD6A. Residues Tyr125–Lys134 carry the Pseudosubstrate motif. The segment at Gly140–Cys190 adopts a Phorbol-ester/DAG-type zinc-finger fold. A disordered region spans residues Pro221–Ser246. The segment covering Glu225–Gly243 has biased composition (basic and acidic residues). The Protein kinase domain maps to Phe254 to Phe522. Ile260–Val268 contacts ATP. Phosphotyrosine; by SRC is present on residues Tyr265 and Tyr280. Residue Lys283 coordinates ATP. Phosphotyrosine; by SRC is present on Tyr334. Asp378 acts as the Proton acceptor in catalysis. Thr412 is subject to Phosphothreonine; by PDPK1. Positions Arg523–Glu594 constitute an AGC-kinase C-terminal domain. Thr564 bears the Phosphothreonine mark.

It belongs to the protein kinase superfamily. AGC Ser/Thr protein kinase family. PKC subfamily. In terms of assembly, forms a complex with SQSTM1 and MP2K5. Interacts directly with SQSTM1. Interacts with IKBKB. Interacts with PARD6A, PARD6B and PARD6G. Part of a quaternary complex containing aPKC, PARD3, a PARD6 protein (PARD6A, PARD6B or PARD6G) and a GTPase protein (CDC42 or RAC1). Part of a complex with LLGL1 and PARD6B. Interacts with ADAP1/CENTA1. Interaction with SMG1, through the ZN-finger domain, activates the kinase activity. Interacts with CDK7. Forms a complex with RAB2A and GAPDH involved in recruitment onto the membrane of vesicular tubular clusters (VTCs). Interacts with ECT2 ('Thr-359' phosphorylated form). Interacts with VAMP2. Interacts with WDFY2 (via WD repeats 1-3). Phosphorylation at Thr-412 in the activation loop is not mandatory for activation. Upon neuronal growth factor (NGF) stimulation, phosphorylated by SRC at Tyr-265, Tyr-280 and Tyr-334. Phosphorylation at Tyr-265 facilitates binding to KPNB1/importin-beta regulating entry of PRKCI into the nucleus. Phosphorylation on Tyr-334 is important for NF-kappa-B stimulation. Phosphorylated at Thr-564 during the initial phase of long term potentiation.

The protein localises to the cytoplasm. The protein resides in the membrane. It localises to the endosome. It is found in the nucleus. The catalysed reaction is L-seryl-[protein] + ATP = O-phospho-L-seryl-[protein] + ADP + H(+). It carries out the reaction L-threonyl-[protein] + ATP = O-phospho-L-threonyl-[protein] + ADP + H(+). Its activity is regulated as follows. Atypical PKCs (PRKCI and PRKCZ) exhibit an elevated basal enzymatic activity (that may be due to the interaction with SMG1 or SQSTM1) and are not regulated by diacylglycerol, phosphatidylserine, phorbol esters or calcium ions. Two specific sites, Thr-412 (activation loop of the kinase domain) and Thr-564 (turn motif), need to be phosphorylated for its full activation. Might also be a target for novel lipid activators that are elevated during nutrient-stimulated insulin secretion. Functionally, calcium- and diacylglycerol-independent serine/ threonine-protein kinase that plays a general protective role against apoptotic stimuli, is involved in NF-kappa-B activation, cell survival, differentiation and polarity, and contributes to the regulation of microtubule dynamics in the early secretory pathway. Is necessary for BCR-ABL oncogene-mediated resistance to apoptotic drug in leukemia cells, protecting leukemia cells against drug-induced apoptosis. In cultured neurons, prevents amyloid beta protein-induced apoptosis by interrupting cell death process at a very early step. In glioblastoma cells, may function downstream of phosphatidylinositol 3-kinase (PI(3)K) and PDPK1 in the promotion of cell survival by phosphorylating and inhibiting the pro-apoptotic factor BAD. Can form a protein complex in non-small cell lung cancer (NSCLC) cells with PARD6A and ECT2 and regulate ECT2 oncogenic activity by phosphorylation, which in turn promotes transformed growth and invasion. In response to nerve growth factor (NGF), acts downstream of SRC to phosphorylate and activate IRAK1, allowing the subsequent activation of NF-kappa-B and neuronal cell survival. Functions in the organization of the apical domain in epithelial cells by phosphorylating EZR. This step is crucial for activation and normal distribution of EZR at the early stages of intestinal epithelial cell differentiation. Forms a protein complex with LLGL1 and PARD6B independently of PARD3 to regulate epithelial cell polarity. Plays a role in microtubule dynamics in the early secretory pathway through interaction with RAB2A and GAPDH and recruitment to vesicular tubular clusters (VTCs). In human coronary artery endothelial cells (HCAEC), is activated by saturated fatty acids and mediates lipid-induced apoptosis. Involved in early synaptic long term potentiation phase in CA1 hippocampal cells and short term memory formation. The protein is Protein kinase C iota type (PRKCI) of Pongo abelii (Sumatran orangutan).